The following is a 93-amino-acid chain: MPRSLKKGPFVDDHLLKKVDVQNEKNTKQVIKTWSRRSTIIPDFIGHTFAVHDGRKHVPVFVTEAMVGHKLGEFAPTRTFKGHIKDDRKAKRR.

The protein belongs to the universal ribosomal protein uS19 family.

In terms of biological role, protein S19 forms a complex with S13 that binds strongly to the 16S ribosomal RNA. The chain is Small ribosomal subunit protein uS19 (rpsS) from Mycobacterium leprae (strain TN).